Here is a 529-residue protein sequence, read N- to C-terminus: Glycylpeptide N-tetradecanoyltransferase 2 (529 aa).

The interval 1–82 (MAEDSESAAS…QEIKIQQSSK (82 aa)) is disordered. The span at 15 to 32 (ELDDQDTCGIDGDNEEET) shows a compositional bias: acidic residues. At Ser-38 the chain carries Phosphoserine. Over residues 46–57 (KKKKKKQKRKKE) the composition is skewed to basic residues. The segment covering 61-82 (SGGTKSDSASDSQEIKIQQSSK) has biased composition (polar residues). Residues Trp-153, Leu-281, Val-283, Ser-289, Arg-291, Val-292, and Ala-293 each contribute to the tetradecanoyl-CoA site.

It belongs to the NMT family.

It is found in the cytoplasm. Its subcellular location is the membrane. It catalyses the reaction N-terminal glycyl-[protein] + tetradecanoyl-CoA = N-tetradecanoylglycyl-[protein] + CoA + H(+). It carries out the reaction N-terminal glycyl-L-lysyl-[protein] + tetradecanoyl-CoA = N-terminal glycyl-(N(6)-tetradecanoyl)-L-lysyl-[protein] + CoA + H(+). In terms of biological role, adds a myristoyl group to the N-terminal glycine residue of certain cellular and viral proteins. Also able to mediate N-terminal lysine myristoylation of proteins: catalyzes myristoylation of ARF6 on both 'Gly-2' and 'Lys-3'. Lysine myristoylation is required to maintain ARF6 on membranes during the GTPase cycle. The sequence is that of Glycylpeptide N-tetradecanoyltransferase 2 (Nmt2) from Mus musculus (Mouse).